Consider the following 411-residue polypeptide: UPF0761 membrane protein PLES_43641 (411 aa).

6 helical membrane passes run 36–56 (LFAV…IPAF), 92–112 (HLTW…LVTI), 132–152 (FLLY…GFAV), 174–194 (LLGL…YSAV), 207–229 (GGVF…VSLF), and 244–264 (IFLL…VLVC).

The protein belongs to the UPF0761 family.

The protein localises to the cell inner membrane. This is UPF0761 membrane protein PLES_43641 from Pseudomonas aeruginosa (strain LESB58).